The sequence spans 368 residues: 1-deoxy-D-xylulose 5-phosphate reductoisomerase (368 aa).

NADPH contacts are provided by Thr-7, Gly-8, Ser-9, Ile-10, Gly-31, Lys-32, Asn-33, and Asn-113. Lys-114 is a 1-deoxy-D-xylulose 5-phosphate binding site. Glu-115 is a binding site for NADPH. Mn(2+) is bound at residue Asp-133. 1-deoxy-D-xylulose 5-phosphate is bound by residues Ser-134, Glu-135, Ser-158, and His-181. A Mn(2+)-binding site is contributed by Glu-135. Gly-187 is an NADPH binding site. 1-deoxy-D-xylulose 5-phosphate-binding residues include Ser-194, Asn-199, Lys-200, and Glu-203. Glu-203 serves as a coordination point for Mn(2+).

Belongs to the DXR family. Mg(2+) is required as a cofactor. It depends on Mn(2+) as a cofactor.

It catalyses the reaction 2-C-methyl-D-erythritol 4-phosphate + NADP(+) = 1-deoxy-D-xylulose 5-phosphate + NADPH + H(+). It participates in isoprenoid biosynthesis; isopentenyl diphosphate biosynthesis via DXP pathway; isopentenyl diphosphate from 1-deoxy-D-xylulose 5-phosphate: step 1/6. Its function is as follows. Catalyzes the NADPH-dependent rearrangement and reduction of 1-deoxy-D-xylulose-5-phosphate (DXP) to 2-C-methyl-D-erythritol 4-phosphate (MEP). The sequence is that of 1-deoxy-D-xylulose 5-phosphate reductoisomerase from Helicobacter pylori (strain ATCC 700392 / 26695) (Campylobacter pylori).